A 234-amino-acid polypeptide reads, in one-letter code: Cyclo(L-leucyl-L-leucyl) synthase (234 aa).

The Nucleophile role is filled by S33. Substrate is bound by residues N36, 179–183, Y203, and 208–209; these read YIFAE and SI.

Belongs to the CDPS family.

The catalysed reaction is 2 L-leucyl-tRNA(Leu) = cyclo(L-leucyl-L-leucyl) + 2 tRNA(Leu) + 2 H(+). It uses activated amino acids in the form of aminoacyl-tRNAs (aa-tRNAs) as substrates to catalyze the ATP-independent formation of cyclodipeptides which are intermediates in diketopiperazine (DKP) biosynthetic pathways. Catalyzes the formation of cyclo(L-Leu-L-Leu) (cLL) from L-leucyl-tRNA(Leu). Can incorporate various nonpolar residues, such as L-phenylalanine, L-leucine and L-methionine, into cyclodipeptides. The sequence is that of Cyclo(L-leucyl-L-leucyl) synthase from Photorhabdus laumondii subsp. laumondii (strain DSM 15139 / CIP 105565 / TT01) (Photorhabdus luminescens subsp. laumondii).